A 124-amino-acid chain; its full sequence is Cholera enterotoxin subunit B (124 aa).

The first 21 residues, 1–21, serve as a signal peptide directing secretion; it reads MIKLKFGVFFTVLLSSAYAHG. C30 and C107 form a disulfide bridge.

The holotoxin (choleragen) consists of a pentameric ring of B subunits whose central pore is occupied by the A subunit. The A subunit contains two chains, A1 and A2, linked by a disulfide bridge.

The protein resides in the secreted. The protein localises to the host cell membrane. Functionally, the B subunit pentameric ring directs the A subunit to its target by binding to the GM1 gangliosides present on the surface of the intestinal epithelial cells. It can bind five GM1 gangliosides. It has no toxic activity by itself. This Vibrio cholerae serotype O1 (strain ATCC 39315 / El Tor Inaba N16961) protein is Cholera enterotoxin subunit B (ctxB).